Reading from the N-terminus, the 161-residue chain is Phosphopantetheine adenylyltransferase (161 aa).

Residue T9 coordinates substrate. ATP is bound by residues T9–F10 and H17. The substrate site is built by K41, L73, and R87. Residues G88–R90, E98, and Y123–T129 each bind ATP.

It belongs to the bacterial CoaD family. Homohexamer. The cofactor is Mg(2+).

The protein localises to the cytoplasm. The catalysed reaction is (R)-4'-phosphopantetheine + ATP + H(+) = 3'-dephospho-CoA + diphosphate. Its pathway is cofactor biosynthesis; coenzyme A biosynthesis; CoA from (R)-pantothenate: step 4/5. In terms of biological role, reversibly transfers an adenylyl group from ATP to 4'-phosphopantetheine, yielding dephospho-CoA (dPCoA) and pyrophosphate. This Cupriavidus pinatubonensis (strain JMP 134 / LMG 1197) (Cupriavidus necator (strain JMP 134)) protein is Phosphopantetheine adenylyltransferase.